The sequence spans 87 residues: Small ribosomal subunit protein uS15 (87 aa).

A compositionally biased stretch (basic and acidic residues) spans 1-19 (MDKAKKQELMAKHARHEGD). The disordered stretch occupies residues 1 to 23 (MDKAKKQELMAKHARHEGDTGSP).

Belongs to the universal ribosomal protein uS15 family. As to quaternary structure, part of the 30S ribosomal subunit. Forms a bridge to the 50S subunit in the 70S ribosome, contacting the 23S rRNA.

Its function is as follows. One of the primary rRNA binding proteins, it binds directly to 16S rRNA where it helps nucleate assembly of the platform of the 30S subunit by binding and bridging several RNA helices of the 16S rRNA. Functionally, forms an intersubunit bridge (bridge B4) with the 23S rRNA of the 50S subunit in the ribosome. The sequence is that of Small ribosomal subunit protein uS15 from Clostridium botulinum (strain Loch Maree / Type A3).